The sequence spans 380 residues: Chorismate synthase (380 aa).

NADP(+) is bound by residues Arg-40 and Arg-46. FMN-binding positions include 128–130, 247–248, Gly-292, 307–311, and Arg-333; these read RSS, QA, and KPIPT.

The protein belongs to the chorismate synthase family. Homotetramer. FMNH2 is required as a cofactor.

It carries out the reaction 5-O-(1-carboxyvinyl)-3-phosphoshikimate = chorismate + phosphate. It functions in the pathway metabolic intermediate biosynthesis; chorismate biosynthesis; chorismate from D-erythrose 4-phosphate and phosphoenolpyruvate: step 7/7. Its function is as follows. Catalyzes the anti-1,4-elimination of the C-3 phosphate and the C-6 proR hydrogen from 5-enolpyruvylshikimate-3-phosphate (EPSP) to yield chorismate, which is the branch point compound that serves as the starting substrate for the three terminal pathways of aromatic amino acid biosynthesis. This reaction introduces a second double bond into the aromatic ring system. The chain is Chorismate synthase from Alkaliphilus metalliredigens (strain QYMF).